Here is a 666-residue protein sequence, read N- to C-terminus: Neopullulanase 1 (666 aa).

The signal sequence occupies residues 1-29; that stretch reads MIKLLKPMSLSILLVFILSFSFPFPTAKA. Ala-31, Asp-33, Asn-35, Asp-71, Asp-125, Asn-174, Asp-176, Asn-179, Asp-180, Gly-216, and Asp-218 together coordinate Ca(2+). Residue His-296 participates in substrate binding. Positions 305, 309, 310, 312, and 317 each coordinate Ca(2+). Arg-383 contacts substrate. Residue Asp-385 is the Nucleophile of the active site. The Proton donor role is filled by Glu-425. Residues 500-501, Asp-545, and Arg-549 contribute to the substrate site; that span reads HD.

This sequence belongs to the glycosyl hydrolase 13 family. It depends on Ca(2+) as a cofactor.

The protein localises to the secreted. It carries out the reaction Hydrolysis of pullulan to panose (6-alpha-D-glucosylmaltose).. In terms of biological role, endohydrolysis of 1,4-alpha-glucosidic linkages in pullulan to form panose. Also hydrolyzes cyclodextrins. The protein is Neopullulanase 1 (tvaI) of Thermoactinomyces vulgaris.